The following is a 62-amino-acid chain: Large ribosomal subunit protein bL28 (62 aa).

The protein belongs to the bacterial ribosomal protein bL28 family.

The chain is Large ribosomal subunit protein bL28 from Parafrankia sp. (strain EAN1pec).